A 242-amino-acid chain; its full sequence is uncharacterized protein (242 aa).

The protein to E.coli MazG and to plasmid pIP1100 erythromycin esterase.

This is an uncharacterized protein from Streptomyces cacaoi.